Consider the following 348-residue polypeptide: GMP reductase (348 aa).

Residue 108–131 (ADFQKTKDVMALSDELIFICIDIA) coordinates NADP(+). K(+) contacts are provided by glycine 181 and glycine 183. Cysteine 186 acts as the Thioimidate intermediate in catalysis. 216-239 (IIGDGGCACAGDVAKAFGGGADFV) contacts NADP(+).

The protein belongs to the IMPDH/GMPR family. GuaC type 1 subfamily. Homotetramer.

It catalyses the reaction IMP + NH4(+) + NADP(+) = GMP + NADPH + 2 H(+). In terms of biological role, catalyzes the irreversible NADPH-dependent deamination of GMP to IMP. It functions in the conversion of nucleobase, nucleoside and nucleotide derivatives of G to A nucleotides, and in maintaining the intracellular balance of A and G nucleotides. In Vibrio vulnificus (strain CMCP6), this protein is GMP reductase.